A 419-amino-acid chain; its full sequence is L-rhamnose isomerase (419 aa).

The Mn(2+) site is built by His-262, Asp-294, and Asp-296.

Belongs to the rhamnose isomerase family. As to quaternary structure, homotetramer. Mn(2+) serves as cofactor.

The protein resides in the cytoplasm. It carries out the reaction L-rhamnopyranose = L-rhamnulose. The protein operates within carbohydrate degradation; L-rhamnose degradation; glycerone phosphate from L-rhamnose: step 1/3. In terms of biological role, catalyzes the interconversion of L-rhamnose and L-rhamnulose. This Escherichia coli O7:K1 (strain IAI39 / ExPEC) protein is L-rhamnose isomerase.